The sequence spans 233 residues: Small heat shock protein hspF (233 aa).

One can recognise a sHSP domain in the interval 129–233; sequence IPLFTFFEPL…ILLITVNKFL (105 aa).

The protein belongs to the small heat shock protein (HSP20) family.

This chain is Small heat shock protein hspF (hspF-1), found in Dictyostelium discoideum (Social amoeba).